Consider the following 865-residue polypeptide: DNA mismatch repair protein MutS (865 aa).

605–612 (GPNMAGKS) contacts ATP. Residues 814-833 (PEPLEAYKPKGNKQPLSDEE) form a disordered region.

Belongs to the DNA mismatch repair MutS family.

Functionally, this protein is involved in the repair of mismatches in DNA. It is possible that it carries out the mismatch recognition step. This protein has a weak ATPase activity. The chain is DNA mismatch repair protein MutS from Halalkalibacterium halodurans (strain ATCC BAA-125 / DSM 18197 / FERM 7344 / JCM 9153 / C-125) (Bacillus halodurans).